We begin with the raw amino-acid sequence, 249 residues long: Probable transcriptional regulatory protein Minf_0651 (249 aa).

The protein belongs to the TACO1 family.

Its subcellular location is the cytoplasm. This chain is Probable transcriptional regulatory protein Minf_0651, found in Methylacidiphilum infernorum (isolate V4) (Methylokorus infernorum (strain V4)).